The sequence spans 501 residues: Myosin heavy chain, embryonic smooth muscle isoform (501 aa).

Positions 1 to 457 (REAREKETKA…TLKNRLRRGG (457 aa)) form a coiled coil. A rodlike tail (S2 and LMM domains) region spans residues 1 to 501 (REAREKETKA…VNETQPPQSE (501 aa)). Disordered regions lie at residues 182-202 (YQRE…QSKE), 221-254 (LASS…ALLD), and 397-501 (MEKA…PQSE). Residues 223-233 (SSERARRHAEQ) show a composition bias toward basic and acidic residues. Over residues 492–501 (VNETQPPQSE) the composition is skewed to polar residues.

In terms of assembly, muscle myosin is a hexameric protein that consists of 2 heavy chain subunits (MHC), 2 alkali light chain subunits (MLC) and 2 regulatory light chain subunits (MLC-2).

The protein resides in the cytoplasm. It localises to the myofibril. In terms of biological role, muscle contraction. The polypeptide is Myosin heavy chain, embryonic smooth muscle isoform (Oryctolagus cuniculus (Rabbit)).